The primary structure comprises 350 residues: Protein RecA (350 aa).

65-72 (GPESSGKT) lines the ATP pocket. The segment at 329–350 (ASPDVKANPVKETEDDMADADI) is disordered. The span at 341–350 (TEDDMADADI) shows a compositional bias: acidic residues.

This sequence belongs to the RecA family.

It localises to the cytoplasm. In terms of biological role, can catalyze the hydrolysis of ATP in the presence of single-stranded DNA, the ATP-dependent uptake of single-stranded DNA by duplex DNA, and the ATP-dependent hybridization of homologous single-stranded DNAs. It interacts with LexA causing its activation and leading to its autocatalytic cleavage. The protein is Protein RecA of Pseudomonas fluorescens (strain ATCC BAA-477 / NRRL B-23932 / Pf-5).